Consider the following 147-residue polypeptide: Hemoglobin anodic subunit beta (147 aa).

One can recognise a Globin domain in the interval 2-147 (EWTDGERTAI…VTSALARQYH (146 aa)). Heme b is bound by residues His63 and His92.

This sequence belongs to the globin family. In terms of assembly, heterotetramer of two alpha chains and two beta chains. In terms of tissue distribution, red blood cells.

Functionally, involved in oxygen transport from gills to the various peripheral tissues. The sequence is that of Hemoglobin anodic subunit beta from Gymnothorax unicolor (Brown moray).